We begin with the raw amino-acid sequence, 922 residues long: Autophagy-related protein 9B (922 aa).

Disordered stretches follow at residues 1 to 22 and 85 to 144; these read MVRRTGWGGSRRQRGRWGDLGP and TPHN…MGPL. Residues 1-206 are Cytoplasmic-facing; it reads MVRRTGWGGS…KIYSYHQRNG (206 aa). Over residues 85–114 the composition is skewed to polar residues; it reads TPHNVLPTPTTPSTQAHPTMIHTSASPSWG. Positions 115–124 are enriched in low complexity; it reads SHSTPPLASA. The Tyrosine-based sorting signal signature appears at 150–153; that stretch reads YERL. A helical membrane pass occupies residues 207–227; it reads FACILLEDVFQLGQFIFIVTF. Residues 228–275 lie on the Lumenal side of the membrane; sequence TTFLLRCVDYNVLFNNQPKNHTRRGPLHSKVTLSDAILPSAQCAEKIH. A helical membrane pass occupies residues 276–296; it reads DSPLLVFLLVLAAGFWLFQLL. The Cytoplasmic segment spans residues 297-437; it reads RSVCNLFSYW…GVLANRWRRT (141 aa). An intramembrane segment occupies 438-458; the sequence is VLLLAAVNLALSPLVLAWQVL. At 459–523 the chain is on the cytoplasmic side; sequence HAFYSHVELL…RAAEPPAPLR (65 aa). A helical membrane pass occupies residues 524 to 544; that stretch reads ALLARQLVFFSGALFAALLVL. Topologically, residues 545-550 are lumenal; it reads TIYDED. The helical transmembrane segment at 551–571 threads the bilayer; it reads VLAVEHVLTTMTALGVTATVA. Residues 572-624 are Cytoplasmic-facing; the sequence is RSFIPEEQCQGRSSQLLLQAALAHMHYLPEEPGATGARASSYWQMAQLLQYRA. An intramembrane segment occupies 625 to 645; that stretch reads VSLLEELLSPLLTPLFLLFWF. Over 646 to 922 the chain is Cytoplasmic; it reads RPRALEIIDF…QKEPLTGPLH (277 aa). The tract at residues 848–922 is disordered; sequence ELWGEASASS…QKEPLTGPLH (75 aa). Low complexity-rich tracts occupy residues 854–870 and 877–889; these read SASSPSRPWSSPSQPGS and SWSSDGSSPASSP. Residues 890–899 show a composition bias toward polar residues; the sequence is RQQWGTQRAQ.

It belongs to the ATG9 family. As to quaternary structure, homotrimer; forms a homotrimer with a central pore that forms a path between the two membrane leaflets. In terms of tissue distribution, expressed in heart, brain, and placenta and testis.

Its subcellular location is the preautophagosomal structure membrane. It catalyses the reaction a 1,2-diacyl-sn-glycero-3-phosphocholine(in) = a 1,2-diacyl-sn-glycero-3-phosphocholine(out). The enzyme catalyses a 1,2-diacyl-sn-glycero-3-phospho-L-serine(in) = a 1,2-diacyl-sn-glycero-3-phospho-L-serine(out). It carries out the reaction a 1,2-diacyl-sn-glycero-3-phosphoethanolamine(in) = a 1,2-diacyl-sn-glycero-3-phosphoethanolamine(out). Phospholipid scramblase involved in autophagy by mediating autophagosomal membrane expansion. Cycles between the preautophagosomal structure/phagophore assembly site (PAS) and the cytoplasmic vesicle pool and supplies membrane for the growing autophagosome. Lipid scramblase activity plays a key role in preautophagosomal structure/phagophore assembly by distributing the phospholipids that arrive through ATG2 (ATG2A or ATG2B) from the cytoplasmic to the luminal leaflet of the bilayer, thereby driving autophagosomal membrane expansion. In addition to autophagy, also plays a role in necrotic cell death. This chain is Autophagy-related protein 9B, found in Mus musculus (Mouse).